A 169-amino-acid chain; its full sequence is X polypeptide (169 aa).

This sequence belongs to the IagB/IpgF/P19 family.

The protein is X polypeptide (X) of Escherichia coli.